The chain runs to 438 residues: Methylenetetrahydrofolate--tRNA-(uracil-5-)-methyltransferase TrmFO (438 aa).

9 to 14 contacts FAD; the sequence is GAGLAG.

Belongs to the MnmG family. TrmFO subfamily. FAD is required as a cofactor.

The protein resides in the cytoplasm. The catalysed reaction is uridine(54) in tRNA + (6R)-5,10-methylene-5,6,7,8-tetrahydrofolate + NADH + H(+) = 5-methyluridine(54) in tRNA + (6S)-5,6,7,8-tetrahydrofolate + NAD(+). The enzyme catalyses uridine(54) in tRNA + (6R)-5,10-methylene-5,6,7,8-tetrahydrofolate + NADPH + H(+) = 5-methyluridine(54) in tRNA + (6S)-5,6,7,8-tetrahydrofolate + NADP(+). Its function is as follows. Catalyzes the folate-dependent formation of 5-methyl-uridine at position 54 (M-5-U54) in all tRNAs. This is Methylenetetrahydrofolate--tRNA-(uracil-5-)-methyltransferase TrmFO from Lactobacillus acidophilus (strain ATCC 700396 / NCK56 / N2 / NCFM).